The chain runs to 371 residues: Probable inactive methyltransferase Os04g0175900 (371 aa).

Position 137-143 (137-143 (LDVDEDN)) interacts with substrate. The segment at 170-188 (LFEYMGTNHRFNMLFNQAM) is substrate binding. S-adenosyl-L-methionine contacts are provided by G216, D239, M260, and K273.

Belongs to the class I-like SAM-binding methyltransferase superfamily. Cation-independent O-methyltransferase family. COMT subfamily.

This is Probable inactive methyltransferase Os04g0175900 from Oryza sativa subsp. japonica (Rice).